We begin with the raw amino-acid sequence, 178 residues long: Phosphopantetheine adenylyltransferase (178 aa).

Thr17 provides a ligand contact to substrate. Residues 17-18 (TF) and His25 each bind ATP. Substrate contacts are provided by Lys49, Leu86, and Arg100. ATP-binding positions include 101–103 (GLR), Glu111, and 136–142 (LQPVASR).

The protein belongs to the bacterial CoaD family. In terms of assembly, homohexamer. Mg(2+) serves as cofactor.

The protein resides in the cytoplasm. The catalysed reaction is (R)-4'-phosphopantetheine + ATP + H(+) = 3'-dephospho-CoA + diphosphate. The protein operates within cofactor biosynthesis; coenzyme A biosynthesis; CoA from (R)-pantothenate: step 4/5. Functionally, reversibly transfers an adenylyl group from ATP to 4'-phosphopantetheine, yielding dephospho-CoA (dPCoA) and pyrophosphate. The protein is Phosphopantetheine adenylyltransferase of Zymomonas mobilis subsp. mobilis (strain ATCC 31821 / ZM4 / CP4).